The following is a 223-amino-acid chain: Deoxyribose-phosphate aldolase (223 aa).

The Proton donor/acceptor role is filled by Asp89. Lys152 acts as the Schiff-base intermediate with acetaldehyde in catalysis. The active-site Proton donor/acceptor is the Lys181.

The protein belongs to the DeoC/FbaB aldolase family. DeoC type 1 subfamily.

It is found in the cytoplasm. The catalysed reaction is 2-deoxy-D-ribose 5-phosphate = D-glyceraldehyde 3-phosphate + acetaldehyde. Its pathway is carbohydrate degradation; 2-deoxy-D-ribose 1-phosphate degradation; D-glyceraldehyde 3-phosphate and acetaldehyde from 2-deoxy-alpha-D-ribose 1-phosphate: step 2/2. Its function is as follows. Catalyzes a reversible aldol reaction between acetaldehyde and D-glyceraldehyde 3-phosphate to generate 2-deoxy-D-ribose 5-phosphate. This is Deoxyribose-phosphate aldolase from Listeria monocytogenes serotype 4b (strain F2365).